Here is a 218-residue protein sequence, read N- to C-terminus: GTP cyclohydrolase 1 (218 aa).

Residues C109, H112, and C180 each coordinate Zn(2+).

This sequence belongs to the GTP cyclohydrolase I family. As to quaternary structure, toroid-shaped homodecamer, composed of two pentamers of five dimers.

It catalyses the reaction GTP + H2O = 7,8-dihydroneopterin 3'-triphosphate + formate + H(+). It functions in the pathway cofactor biosynthesis; 7,8-dihydroneopterin triphosphate biosynthesis; 7,8-dihydroneopterin triphosphate from GTP: step 1/1. This Aeromonas hydrophila subsp. hydrophila (strain ATCC 7966 / DSM 30187 / BCRC 13018 / CCUG 14551 / JCM 1027 / KCTC 2358 / NCIMB 9240 / NCTC 8049) protein is GTP cyclohydrolase 1.